Consider the following 150-residue polypeptide: Macrodomain Ter protein (150 aa).

This sequence belongs to the MatP family. As to quaternary structure, homodimer.

Its subcellular location is the cytoplasm. Required for spatial organization of the terminus region of the chromosome (Ter macrodomain) during the cell cycle. Prevents early segregation of duplicated Ter macrodomains during cell division. Binds specifically to matS, which is a 13 bp signature motif repeated within the Ter macrodomain. In Escherichia coli O6:K15:H31 (strain 536 / UPEC), this protein is Macrodomain Ter protein.